A 295-amino-acid polypeptide reads, in one-letter code: Small ribosomal subunit protein uS2 (295 aa).

Residue S2 is modified to N-acetylserine. S43 carries the post-translational modification Phosphoserine. K52 bears the N6-acetyllysine mark. An interaction with PPP1R16B region spans residues 54-113; that stretch reads TWEKLLLAARAIVAIENPADVSVISSRNTGQRAVLKFAAATGATPIAGRFTPGTFTNQIQ. Residue K89 is modified to N6-acetyllysine; alternate. A Glycyl lysine isopeptide (Lys-Gly) (interchain with G-Cter in SUMO2); alternate cross-link involves residue K89. The residue at position 97 (T97) is a Phosphothreonine. 2 laminin-binding regions span residues 161 to 180 and 205 to 229; these read IPCN…MLAR and RDPE…EFQG. [DE]-W-[ST] repeat units follow at residues 230–232, 247–249, 266–268, 275–277, and 293–295; these read EWT, DWS, and EWS. Positions 242 to 295 are laminin-binding; the sequence is QPEVADWSEGVQVPSVPIQQFPTEDWSAQPATEDWSAAPTAQATEWVGATTEWS. The disordered stretch occupies residues 266–295; the sequence is DWSAQPATEDWSAAPTAQATEWVGATTEWS.

This sequence belongs to the universal ribosomal protein uS2 family. In terms of assembly, monomer (37LRP) and homodimer (67LR). Component of the small ribosomal subunit. Mature ribosomes consist of a small (40S) and a large (60S) subunit. The 40S subunit contains about 33 different proteins and 1 molecule of RNA (18S). The 60S subunit contains about 49 different proteins and 3 molecules of RNA (28S, 5.8S and 5S). Interacts with RPS21. Interacts with several laminins including at least LAMB1. Interacts with MDK. The mature dimeric form interacts with PPP1R16B (via its fourth ankyrin repeat). Interacts with PPP1CA only in the presence of PPP1R16B. Acylated. Acylation may be a prerequisite for conversion of the monomeric 37 kDa laminin receptor precursor (37LRP) to the mature dimeric 67 kDa laminin receptor (67LR), and may provide a mechanism for membrane association. In terms of processing, cleaved by stromelysin-3 (ST3) at the cell surface. Cleavage by stromelysin-3 may be a mechanism to alter cell-extracellular matrix interactions. As to expression, expressed in most neurons and in a subset of glial cells. The overall distribution of LR correlates with that reported for laminin-1 but also with brain regions classically associated with prion-related neurodegeneration.

It is found in the cell membrane. Its subcellular location is the cytoplasm. It localises to the nucleus. Functionally, required for the assembly and/or stability of the 40S ribosomal subunit. Required for the processing of the 20S rRNA-precursor to mature 18S rRNA in a late step of the maturation of 40S ribosomal subunits. Also functions as a cell surface receptor for laminin. Plays a role in cell adhesion to the basement membrane and in the consequent activation of signaling transduction pathways. May play a role in cell fate determination and tissue morphogenesis. Also acts as a receptor for several other ligands, including the pathogenic prion protein, viruses, and bacteria. Acts as a PPP1R16B-dependent substrate of PPP1CA. The protein is Small ribosomal subunit protein uS2 (Rpsa) of Rattus norvegicus (Rat).